Reading from the N-terminus, the 566-residue chain is Mediator of RNA polymerase II transcription subunit 1 (566 aa).

Serine 155 is subject to Phosphoserine. Residues 361 to 425 (TPSSNSNSSE…TNKSKRPSIT (65 aa)) form a disordered region. Residues 410 to 421 (RRRRSSTNKSKR) are compositionally biased toward basic residues. Position 423 is a phosphoserine (serine 423).

It belongs to the Mediator complex subunit 1 family. In terms of assembly, component of the Mediator complex, which is composed of at least 21 subunits that form three structurally distinct submodules. The Mediator head module contains MED6, MED8, MED11, SRB4/MED17, SRB5/MED18, ROX3/MED19, SRB2/MED20 and SRB6/MED22, the middle module contains MED1, MED4, NUT1/MED5, MED7, CSE2/MED9, NUT2/MED10, SRB7/MED21 and SOH1/MED31, and the tail module contains MED2, PGD1/MED3, RGR1/MED14, GAL11/MED15 and SIN4/MED16. The head and the middle modules interact directly with RNA polymerase II, whereas the elongated tail module interacts with gene-specific regulatory proteins. MED1 interacts directly with MED4 and MED7.

The protein resides in the nucleus. In terms of biological role, component of the Mediator complex, a coactivator involved in the regulated transcription of nearly all RNA polymerase II-dependent genes. Mediator functions as a bridge to convey information from gene-specific regulatory proteins to the basal RNA polymerase II transcription machinery. The Mediator complex, having a compact conformation in its free form, is recruited to promoters by direct interactions with regulatory proteins and serves for the assembly of a functional preinitiation complex with RNA polymerase II and the general transcription factors. The Mediator complex unfolds to an extended conformation and partially surrounds RNA polymerase II, specifically interacting with the unphosphorylated form of the C-terminal domain (CTD) of RNA polymerase II. The Mediator complex dissociates from the RNA polymerase II holoenzyme and stays at the promoter when transcriptional elongation begins. In Saccharomyces cerevisiae (strain ATCC 204508 / S288c) (Baker's yeast), this protein is Mediator of RNA polymerase II transcription subunit 1 (MED1).